The following is a 23-amino-acid chain: Acidic phospholipase A2 Cvv-E6c (23 aa).

Ca(2+) serves as cofactor. Contains 7 disulfide bonds. Expressed by the venom gland.

The protein resides in the secreted. It carries out the reaction a 1,2-diacyl-sn-glycero-3-phosphocholine + H2O = a 1-acyl-sn-glycero-3-phosphocholine + a fatty acid + H(+). Snake venom phospholipase A2 (PLA2) that significantly inhibits ADP-induced platelet aggregation in platelet-rich plasma of human, rabbit and guinea pig. PLA2 catalyzes the calcium-dependent hydrolysis of the 2-acyl groups in 3-sn-phosphoglycerides. This Crotalus viridis viridis (Prairie rattlesnake) protein is Acidic phospholipase A2 Cvv-E6c.